A 210-amino-acid chain; its full sequence is 7-carboxy-7-deazaguanine synthase (210 aa).

Substrate is bound by residues 12–14 (LQG) and arginine 27. Residues 18–210 (QAGRAAVFCR…LQTHKYIGIP (193 aa)) enclose the Radical SAM core domain. Residues cysteine 31, cysteine 46, and cysteine 49 each coordinate [4Fe-4S] cluster. Mg(2+) is bound at residue threonine 51. A substrate-binding site is contributed by threonine 90. S-adenosyl-L-methionine-binding positions include glycine 92, 133–135 (SPK), and 173–176 (QPMD). A substrate-binding site is contributed by proline 210.

This sequence belongs to the radical SAM superfamily. 7-carboxy-7-deazaguanine synthase family. In terms of assembly, homodimer. Requires [4Fe-4S] cluster as cofactor. It depends on S-adenosyl-L-methionine as a cofactor. Mg(2+) serves as cofactor.

It catalyses the reaction 6-carboxy-5,6,7,8-tetrahydropterin + H(+) = 7-carboxy-7-deazaguanine + NH4(+). The protein operates within purine metabolism; 7-cyano-7-deazaguanine biosynthesis. Functionally, catalyzes the complex heterocyclic radical-mediated conversion of 6-carboxy-5,6,7,8-tetrahydropterin (CPH4) to 7-carboxy-7-deazaguanine (CDG), a step common to the biosynthetic pathways of all 7-deazapurine-containing compounds. The chain is 7-carboxy-7-deazaguanine synthase from Bordetella pertussis (strain Tohama I / ATCC BAA-589 / NCTC 13251).